Consider the following 137-residue polypeptide: Holo-[acyl-carrier-protein] synthase (137 aa).

2 residues coordinate Mg(2+): D8 and E57.

This sequence belongs to the P-Pant transferase superfamily. AcpS family. The cofactor is Mg(2+).

The protein localises to the cytoplasm. It catalyses the reaction apo-[ACP] + CoA = holo-[ACP] + adenosine 3',5'-bisphosphate + H(+). Transfers the 4'-phosphopantetheine moiety from coenzyme A to a Ser of acyl-carrier-protein. The sequence is that of Holo-[acyl-carrier-protein] synthase from Cereibacter sphaeroides (strain ATCC 17025 / ATH 2.4.3) (Rhodobacter sphaeroides).